The primary structure comprises 118 residues: MVPRVWSLMRFLIKGSVAGGAIYLVYDQDPLGPSDKSQAALQKAEEVVPPAVYQFSQYVCEQTGLKIPQLPAPPKFNFHIRDYWNSGVIKVMSALSVAPSKAREYSKEGWEYLKERTK.

Over 1 to 7 (MVPRVWS) the chain is Mitochondrial matrix. A helical membrane pass occupies residues 8–26 (LMRFLIKGSVAGGAIYLVY). The Mitochondrial intermembrane segment spans residues 27-118 (DQDPLGPSDK…GWEYLKERTK (92 aa)).

This sequence belongs to the MICOS complex subunit Mic13 family. Component of the mitochondrial contact site and cristae organizing system (MICOS) complex, composed of at least MICOS10/MIC10, CHCHD3/MIC19, CHCHD6/MIC25, APOO/MIC26, MICOS13/MIC13, APOOL/MIC27 and IMMT/MIC60. The MICOS complex associates with mitochondrial outer membrane proteins SAMM50, MTX1 and MTX2 (together described as components of the mitochondrial outer membrane sorting assembly machinery (SAM) complex) and DNAJC11, mitochondrial inner membrane protein TMEM11 and with HSPA9. The MICOS and SAM complexes together with DNAJC11 are part of a large protein complex spanning both membranes termed the mitochondrial intermembrane space bridging (MIB) complex.

The protein localises to the mitochondrion inner membrane. Its function is as follows. Component of the MICOS complex, a large protein complex of the mitochondrial inner membrane that plays crucial roles in the maintenance of crista junctions, inner membrane architecture, and formation of contact sites to the outer membrane. Constituent of mature MICOS complex, it is required for the formation of cristae junction (CJ) and maintenance of cristae morphology. Required for the incorporation of MICOS10/MIC10 into the MICOS complex. This Sus scrofa (Pig) protein is MICOS complex subunit MIC13.